A 684-amino-acid polypeptide reads, in one-letter code: Ski-like protein (684 aa).

Glycyl lysine isopeptide (Lys-Gly) (interchain with G-Cter in SUMO2) cross-links involve residues lysine 50 and lysine 70. The tract at residues 420-454 is disordered; that stretch reads SQSKELTKTEASKSISRQSEKAHSSGKLQKTVSYP. Position 452 is a phosphoserine (serine 452). Glycyl lysine isopeptide (Lys-Gly) (interchain with G-Cter in SUMO2) cross-links involve residues lysine 489 and lysine 527. A coiled-coil region spans residues 536 to 684; that stretch reads RTYLKQQEKL…ILKSSKTAKE (149 aa).

The protein belongs to the SKI family. In terms of assembly, interacts with CPNE4 (via VWFA domain). Interacts with SMAD2, SMAD3 and RNF111. Isoform 1 interacts with WWP1. Post-translationally, ubiquitinated by RNF111 and ARK2C, promoting proteasomal degradation, leading to enhance the BMP-Smad signaling. In terms of tissue distribution, isoform SNON and isoform SNOA are widely expressed. Highest expression is found in skeletal muscle, followed by placenta and lung. Lowest expression in heart, brain and pancreas. Isoform SNOI expression is restricted to skeletal muscle.

May have regulatory role in cell division or differentiation in response to extracellular signals. The chain is Ski-like protein (SKIL) from Homo sapiens (Human).